Reading from the N-terminus, the 465-residue chain is Phosphatidylserine synthase 1 (465 aa).

At 1-35 (MATTFRSQTLSKDDVNYRMHFRMINEQQVEDITIQ) the chain is on the cytoplasmic side. Residues 36–56 (FFYKPHTISLLTVTVLSLMYF) traverse the membrane as a helical segment. Over 57 to 70 (AFTRDDGDPDSNLR) the chain is Lumenal. Residues 71 to 91 (VGLILLVSFFLVISVLAFPNG) traverse the membrane as a helical segment. At 92–102 (PFTRPHPAIWR) the chain is on the cytoplasmic side. A helical membrane pass occupies residues 103–123 (IVFGLSVLYFLFLVFIIFLNW). Over 124–286 (DQVKALMFWL…WLDPKSSLQR (163 aa)) the chain is Lumenal. The helical transmembrane segment at 287-307 (VMGVYLFMIIWQLTELNTFFL) threads the bilayer. Residues 308 to 309 (KH) lie on the Cytoplasmic side of the membrane. Residues 310 to 330 (IFVFPACHALSWCRILFIGII) form a helical membrane-spanning segment. Residues 331 to 355 (TAPTVRQYYAYLTDTQCKRVGTQCW) lie on the Lumenal side of the membrane. Residues 356-376 (VFGAIAFLEALACIKFGQDLF) traverse the membrane as a helical segment. The Cytoplasmic portion of the chain corresponds to 377-380 (SKTQ). Residues 381–401 (ILYVILWLVCLAFITFLCLYV) form a helical membrane-spanning segment. At 402–465 (MVWYAENYGP…DSRTINGMEK (64 aa)) the chain is on the lumenal side. A disordered region spans residues 446-465 (CSTRKRRDSGDSRTINGMEK).

This sequence belongs to the phosphatidyl serine synthase family.

Its subcellular location is the endoplasmic reticulum membrane. The enzyme catalyses a 1,2-diacyl-sn-glycero-3-phosphoethanolamine + L-serine = a 1,2-diacyl-sn-glycero-3-phospho-L-serine + ethanolamine. It catalyses the reaction a 1,2-diacyl-sn-glycero-3-phosphocholine + L-serine = a 1,2-diacyl-sn-glycero-3-phospho-L-serine + choline. It functions in the pathway phospholipid metabolism; phosphatidylserine biosynthesis. Its function is as follows. Catalyzes a base-exchange reaction in which the polar head group of phosphatidylethanolamine (PE) or phosphatidylcholine (PC) is replaced by L-serine. Catalyzes mainly the conversion of phosphatidylcholine but also converts, in vitro and to a lesser extent, phosphatidylethanolamine. This Danio rerio (Zebrafish) protein is Phosphatidylserine synthase 1 (ptdss1).